The primary structure comprises 222 residues: MPSLSKEAALVHDALVARGLETPLRPPMDELDNETRKSLIAGHMTEIMQLLNLDLSDDSLMETPHRIAKMYVDEIFAGLDYANFPKITLIENKMKVDEMVTVRDITLTSTCEHHFVTIDGKATVAYIPKDYVIGLSKINRIVQFFAQRPQVQERLTQQILTALQTLLGTNNVAVSIDAVHYCVKARGIRDATSATTTTSLGGLFKSSQNTRQEFLRAVRHHP.

Residues C111, H114, and C182 each contribute to the Zn(2+) site.

It belongs to the GTP cyclohydrolase I family. In terms of assembly, homomer.

It catalyses the reaction GTP + H2O = 7,8-dihydroneopterin 3'-triphosphate + formate + H(+). Its pathway is cofactor biosynthesis; 7,8-dihydroneopterin triphosphate biosynthesis; 7,8-dihydroneopterin triphosphate from GTP: step 1/1. The polypeptide is GTP cyclohydrolase 1 (Salmonella gallinarum (strain 287/91 / NCTC 13346)).